The chain runs to 205 residues: Endothelial cell-specific chemotaxis regulator (205 aa).

Positions 1-24 (MGTAGAMQLCWVILGFLLFRGHNS) are cleaved as a signal peptide. At 25 to 124 (QPTMTQTSSS…TSETVLTVAA (100 aa)) the chain is on the extracellular side. Polar residues-rich tracts occupy residues 49–71 (SSNP…STGT) and 86–101 (SRDT…TTMS). Residues 49-101 (SSNPGYIPSSEANRPSHLSSTGTPGAGVPSSGRDGGTSRDTFQTVPPNSTTMS) form a disordered region. A helical membrane pass occupies residues 125–145 (FGVISFIVILVVVVIILVGVV). At 146 to 205 (SLRFKCRKSKESEDPQKPGSSGLSESCSTANGEKDSITLISMKNINMNNGKQSLSAEKVL) the chain is on the cytoplasmic side. Positions 153–175 (KSKESEDPQKPGSSGLSESCSTA) are disordered. The span at 163 to 175 (PGSSGLSESCSTA) shows a compositional bias: polar residues. At serine 198 the chain carries Phosphoserine.

The protein belongs to the ECSCR family. As to quaternary structure, interacts with FLNA. Interacts with the 20S proteasome subunit PSMA7. Post-translationally, may be heavily O-glycosylated. As to expression, highest expression in endothelial cells. Also detected in vascular smooth muscle, macrophages, lymphocytes, and mast cells.

The protein resides in the cell membrane. The protein localises to the cytoplasm. In terms of biological role, regulates endothelial chemotaxis and tube formation. Has a role in angiogenesis and apoptosis via modulation of the actin cytoskeleton and facilitation of proteasomal degradation of the apoptosis inhibitors BIRC3/IAP1 and BIRC2/IAP2. The protein is Endothelial cell-specific chemotaxis regulator (ECSCR) of Homo sapiens (Human).